The sequence spans 317 residues: MTTTQKHDLFTPEPHYVPGYAGFFPQLRYQVGNTYGRTTGQLLTDPSVQKSPCSVLSPMSKPKFIEDFSQSKPPRVPCQDLTEPYIPHYTSLKPSKNFEILGQLPPLEVDAQEPPGVENIPRQILLPAGFTPDTPHPPCPPGRKGDSRDLGHPVYGEEAWKSATPVCEAPRQHQLYHCQRDEYPPPARRQQETLDVGSFQRLPQLDHPNLIQRKAISGYAGFIPRFTWVMGLNYRDGVMQAMDEFDKSQFLFRNPHCDLGEKLPGTHWPSNHIYSSQGLIPFYMGFIPAMQDNYALTFGNSTRRAYWKEWAKRNHTL.

The disordered stretch occupies residues 131–153 (TPDTPHPPCPPGRKGDSRDLGHP).

It belongs to the CIMIP2 family. As to quaternary structure, microtubule inner protein component of sperm flagellar doublet microtubules.

It is found in the cytoplasm. It localises to the cytoskeleton. The protein localises to the flagellum axoneme. Its function is as follows. Microtubule inner protein (MIP) part of the dynein-decorated doublet microtubules (DMTs) in flagellum axoneme. Binds to the intra-tubulin interfaces. The polypeptide is Ciliary microtubule inner protein 2A (Homo sapiens (Human)).